The primary structure comprises 1995 residues: Myosin-14 (1995 aa).

Residues 1-46 are disordered; the sequence is MAAVTMSVPGRKAPPRPGPVPEAAQPFLFTPRGPSAGGGPGSGTSP. Ala-2 carries the post-translational modification N-acetylalanine. Positions 51 to 101 constitute a Myosin N-terminal SH3-like domain; sequence TARRLVWVPSELHGFEAAALRDEGEEEAEVELAESGRRLRLPRDQIQRMNP. A Phosphoserine modification is found at Ser-60. The region spanning 105-800 is the Myosin motor domain; sequence SKAEDMAELT…VLAQLEEERD (696 aa). 198 to 205 is a binding site for ATP; sequence GESGAGKT. Residues 678–700 are actin-binding; sequence LSRLMATLSNTNPSFVRCIVPNH. In terms of domain architecture, IQ spans 803-832; the sequence is VTDIIVSFQAAARGYLARRAFQKRQQQQSA. Residues 862–1947 are a coiled coil; sequence LQVTRQDEVL…VTTLRNRLRR (1086 aa). Thr-1194 carries the post-translational modification Phosphothreonine. Disordered stretches follow at residues 1371–1415, 1592–1623, 1905–1942, and 1958–1995; these read EEAA…RRAA, QHER…VERD, EAEE…TTLR, and RQVF…AHPQ. Over residues 1930–1942 the composition is skewed to polar residues; it reads SAESMNREVTTLR. 4 positions are modified to phosphoserine: Ser-1969, Ser-1980, Ser-1983, and Ser-1989. Positions 1981 to 1995 are enriched in pro residues; it reads GPSPEPEGSPPAHPQ.

This sequence belongs to the TRAFAC class myosin-kinesin ATPase superfamily. Myosin family. As to quaternary structure, myosin is a hexameric protein that consists of 2 heavy chain subunits (MHC), 2 alkali light chain subunits (MLC) and 2 regulatory light chain subunits (MLC-2). In terms of tissue distribution, high levels of expression are found in brain (highest in corpus callosum), heart, kidney, liver, lung, small intestine, colon and skeletal muscle. Expression is low in organs composed mainly of smooth muscle, such as aorta, uterus and urinary bladder. No detectable expression is found in thymus, spleen, placenta and lymphocytes.

Functionally, cellular myosin that appears to play a role in cytokinesis, cell shape, and specialized functions such as secretion and capping. The chain is Myosin-14 (MYH14) from Homo sapiens (Human).